A 696-amino-acid chain; its full sequence is Polyribonucleotide nucleotidyltransferase (696 aa).

Residues D483 and D489 each coordinate Mg(2+). Positions 550–609 constitute a KH domain; that stretch reads PRITTIWVKVDKIRDVIGSGGKNIRSVTEATGVSIDIDDTGKINIASTNKEACDLAIKMI. The 69-residue stretch at 619–687 folds into the S1 motif domain; sequence GKLYMGTVKK…KQGKIKLSRK (69 aa).

This sequence belongs to the polyribonucleotide nucleotidyltransferase family. Requires Mg(2+) as cofactor.

It is found in the cytoplasm. The catalysed reaction is RNA(n+1) + phosphate = RNA(n) + a ribonucleoside 5'-diphosphate. Functionally, involved in mRNA degradation. Catalyzes the phosphorolysis of single-stranded polyribonucleotides processively in the 3'- to 5'-direction. This chain is Polyribonucleotide nucleotidyltransferase, found in Citrifermentans bemidjiense (strain ATCC BAA-1014 / DSM 16622 / JCM 12645 / Bem) (Geobacter bemidjiensis).